The following is a 262-amino-acid chain: Electron transfer flavoprotein beta subunit lysine methyltransferase (262 aa).

Residues 1–38 (MALSLGWKAHRNHCGLLLQALRSSGLLLFPCGQCPWRG) constitute a mitochondrion transit peptide.

Belongs to the methyltransferase superfamily. ETFBKMT family. Interacts with HSPD1; this protein may possibly be a methylation substrate.

It localises to the cytoplasm. The protein resides in the mitochondrion matrix. It catalyses the reaction L-lysyl-[protein] + 3 S-adenosyl-L-methionine = N(6),N(6),N(6)-trimethyl-L-lysyl-[protein] + 3 S-adenosyl-L-homocysteine + 3 H(+). Functionally, protein-lysine methyltransferase that selectively trimethylates the flavoprotein ETFB in mitochondria. Thereby, may negatively regulate the function of ETFB in electron transfer from Acyl-CoA dehydrogenases to the main respiratory chain. The polypeptide is Electron transfer flavoprotein beta subunit lysine methyltransferase (Homo sapiens (Human)).